Here is a 451-residue protein sequence, read N- to C-terminus: MKTRSEIENRMQDIEYALLGKALIFEDSTEYILRQLANYEFKCSHHKNIFIVFKYLKDNGLPITVDSAWEELLRRRIKDMDKSYLGLMLHDALSNDKLRSVSHTVFLDDLSVCSAEENLSNFIFRSFNEYNENPLRRSPFLLLERIKGRLDSAIAKTFSIRSARGRSIYDIFSQSEIGVLARIKKRRATFSENQNSFFDAFPTGYKDIDDKGVILAKGNFVIIAARPSIGKTALAIDMAINLAVTQQRRVGFLSLEMSAGQIVERIIANLTGISGEKLQRGDLSKEELFRVEEAGETVRESHFYICSDSQYKLNLIANQIRLLRKEDRVDVIFIDYLQLINSSVGENRQNEIADISRTLRGLASELNIPIVCLSQLSRKVEDRANKVPMLSDLRDSGQIEQDADVILFINRKESSSNCEITVGKNRHGSVFSSVLHFDPKISKFSAIKKVW.

Positions 194–451 constitute an SF4 helicase domain; that stretch reads QNSFFDAFPT…SKFSAIKKVW (258 aa). 225 to 232 contacts ATP; sequence ARPSIGKT.

This sequence belongs to the helicase family. DnaB subfamily. In terms of assembly, homohexamer.

It carries out the reaction Couples ATP hydrolysis with the unwinding of duplex DNA at the replication fork by translocating in the 5'-3' direction. This creates two antiparallel DNA single strands (ssDNA). The leading ssDNA polymer is the template for DNA polymerase III holoenzyme which synthesizes a continuous strand.. The enzyme catalyses ATP + H2O = ADP + phosphate + H(+). Its function is as follows. A replicative DNA helicase, it participates in initiation and elongation during DNA replication. Travels ahead of the DNA replisome, separating dsDNA into templates for DNA synthesis. A processive ATP-dependent 5'-3' DNA helicase it has DNA-dependent ATPase activity. In terms of biological role, the plasmid this protein is encoded on is thought to be required for growth within mammalian cells. The protein is Probable plasmid replicative DNA helicase of Chlamydia trachomatis serovar L2 (strain ATCC VR-902B / DSM 19102 / 434/Bu).